The primary structure comprises 194 residues: Probable molybdenum cofactor guanylyltransferase (194 aa).

Residues 8 to 10 (LAG), lysine 20, and aspartate 99 each bind GTP. Residue aspartate 99 participates in Mg(2+) binding.

The protein belongs to the MobA family. Mg(2+) serves as cofactor.

It is found in the cytoplasm. It carries out the reaction Mo-molybdopterin + GTP + H(+) = Mo-molybdopterin guanine dinucleotide + diphosphate. Functionally, transfers a GMP moiety from GTP to Mo-molybdopterin (Mo-MPT) cofactor (Moco or molybdenum cofactor) to form Mo-molybdopterin guanine dinucleotide (Mo-MGD) cofactor. The sequence is that of Probable molybdenum cofactor guanylyltransferase from Synechococcus elongatus (strain ATCC 33912 / PCC 7942 / FACHB-805) (Anacystis nidulans R2).